Here is a 434-residue protein sequence, read N- to C-terminus: dTDP-D-glucose 4,6-dehydratase (434 aa).

Threonine 134 is a substrate binding site. Catalysis depends on aspartate 135, which acts as the Proton donor. Residues glutamate 136 and tyrosine 169 each act as proton acceptor in the active site. Residues 286 to 309 (NNNNNNNNNNNNNNNNNNNNNNNN) show a composition bias toward low complexity. Residues 286 to 310 (NNNNNNNNNNNNNNNNNNNNNNNND) form a disordered region.

It belongs to the NAD(P)-dependent epimerase/dehydratase family. dTDP-glucose dehydratase subfamily. Requires NAD(+) as cofactor.

The catalysed reaction is dTDP-alpha-D-glucose = dTDP-4-dehydro-6-deoxy-alpha-D-glucose + H2O. This Dictyostelium discoideum (Social amoeba) protein is dTDP-D-glucose 4,6-dehydratase (tgds).